A 746-amino-acid chain; its full sequence is Exocyst complex component 3-like protein (746 aa).

The disordered stretch occupies residues 1 to 23; sequence MDSAAKDEMQPALSPGPEWPEQE. Residues 1-370 are mediates interaction with EXOC2, EXOC4 and EXOC5; the sequence is MDSAAKDEMQ…DVSQLEPLLT (370 aa).

It belongs to the SEC6 family. As to quaternary structure, interacts with EXOC2, EXOC4 and EXOC5; may be part of the exocyst.

Its subcellular location is the cytoplasmic vesicle. It localises to the secretory vesicle. In terms of biological role, as part of the exocyst, may play a role in regulated exocytosis of insulin granules. This chain is Exocyst complex component 3-like protein (EXOC3L1), found in Homo sapiens (Human).